The chain runs to 597 residues: Elongation factor 4 (597 aa).

Positions 2 to 184 (DHIRNFSIIA…SLIAKVPPPK (183 aa)) constitute a tr-type G domain. Residues 14-19 (DHGKST) and 131-134 (NKID) contribute to the GTP site.

The protein belongs to the TRAFAC class translation factor GTPase superfamily. Classic translation factor GTPase family. LepA subfamily.

The protein resides in the cell inner membrane. It carries out the reaction GTP + H2O = GDP + phosphate + H(+). Its function is as follows. Required for accurate and efficient protein synthesis under certain stress conditions. May act as a fidelity factor of the translation reaction, by catalyzing a one-codon backward translocation of tRNAs on improperly translocated ribosomes. Back-translocation proceeds from a post-translocation (POST) complex to a pre-translocation (PRE) complex, thus giving elongation factor G a second chance to translocate the tRNAs correctly. Binds to ribosomes in a GTP-dependent manner. This is Elongation factor 4 from Burkholderia lata (strain ATCC 17760 / DSM 23089 / LMG 22485 / NCIMB 9086 / R18194 / 383).